Here is a 689-residue protein sequence, read N- to C-terminus: Pyocin-S2 (689 aa).

His-656, His-681, and His-685 together coordinate Zn(2+).

Belongs to the colicin/pyosin nuclease family. In terms of assembly, purified pyocin S2 makes up a complex of the two (large and small) proteins. The large protein, but not the pyocin complex, shows in vitro DNase activity.

Its function is as follows. Causes breakdown of chromosomal DNA as well as complete inhibition of lipid synthesis in sensitive cells. This is Pyocin-S2 (pys2) from Pseudomonas aeruginosa (strain ATCC 15692 / DSM 22644 / CIP 104116 / JCM 14847 / LMG 12228 / 1C / PRS 101 / PAO1).